Here is a 311-residue protein sequence, read N- to C-terminus: MGSFQLEDFAAGWIGGAASVIVGHPLDTVKTRLQAGVGYGNTLSCIRVVYRRESMFGFFKGMSFPLASIAVYNSVVFGVFSNTQRFLSQHRCGEPEASPPRTLSDLLLASMVAGVVSVGLGGPVDLIKIRLQMQTQPFRDANLGLKSRAVAPAEQPAYQGPVHCITTIVRNEGLAGLYRGASAMLLRDVPGYCLYFIPYVFLSEWITPEACTGPSPCAVWLAGGMAGAISWGTATPMDVVKSRLQADGVYLNKYKGVLDCISQSYQKEGLKVFFRGITVNAVRGFPMSAAMFLGYELSLQAIRGDHAVTSP.

Solcar repeat units follow at residues 3 to 86 (SFQL…TQRF), 101 to 205 (RTLS…LSEW), and 214 to 301 (PSPC…SLQA). Helical transmembrane passes span 9 to 29 (FAAGWIGGAASVIVGHPLDTV), 61 to 81 (GMSFPLASIAVYNSVVFGVFS), 107 to 127 (LLASMVAGVVSVGLGGPVDLI), 189 to 209 (VPGYCLYFIPYVFLSEWITPE), 217 to 237 (CAVWLAGGMAGAISWGTATPM), and 277 to 295 (ITVNAVRGFPMSAAMFLGY).

Belongs to the mitochondrial carrier (TC 2.A.29) family.

Its subcellular location is the mitochondrion inner membrane. The sequence is that of Solute carrier family 25 member 48 (SLC25A48) from Homo sapiens (Human).